We begin with the raw amino-acid sequence, 284 residues long: 4-hydroxybenzoate octaprenyltransferase (284 aa).

9 helical membrane-spanning segments follow: residues 19–39, 42–62, 85–105, 107–127, 134–154, 165–185, 211–231, 233–253, and 261–281; these read IPILLILWPTLTALVLASHGL, ISYLVIFTIGVVVMRTVGCII, GQLSIKNAIWLCISLTLVAFI, VLFLNLYTILLSFVALFLAIL, FFAIPQLILGLAFNFGIFMAF, AWIFYIATICWTIAYDTIYAL, ILLFNFLSLLLLIILGIYCDF, SFFYLGVVICSLFFVRNYFLY, and CINAFSANHWIGLIIFIIAVI.

This sequence belongs to the UbiA prenyltransferase family. The cofactor is Mg(2+).

The protein localises to the cell inner membrane. The enzyme catalyses all-trans-octaprenyl diphosphate + 4-hydroxybenzoate = 4-hydroxy-3-(all-trans-octaprenyl)benzoate + diphosphate. It participates in cofactor biosynthesis; ubiquinone biosynthesis. Its function is as follows. Catalyzes the prenylation of para-hydroxybenzoate (PHB) with an all-trans polyprenyl group. Mediates the second step in the final reaction sequence of ubiquinone-8 (UQ-8) biosynthesis, which is the condensation of the polyisoprenoid side chain with PHB, generating the first membrane-bound Q intermediate 3-octaprenyl-4-hydroxybenzoate. This chain is 4-hydroxybenzoate octaprenyltransferase, found in Francisella tularensis subsp. holarctica (strain LVS).